Reading from the N-terminus, the 445-residue chain is Phosphoglucosamine mutase 1 (445 aa).

Residue Ser102 is the Phosphoserine intermediate of the active site. Mg(2+) is bound by residues Ser102, Asp241, Asp243, and Asp245. At Ser102 the chain carries Phosphoserine.

This sequence belongs to the phosphohexose mutase family. Mg(2+) serves as cofactor. Activated by phosphorylation.

The enzyme catalyses alpha-D-glucosamine 1-phosphate = D-glucosamine 6-phosphate. Functionally, catalyzes the conversion of glucosamine-6-phosphate to glucosamine-1-phosphate. The protein is Phosphoglucosamine mutase 1 of Shewanella frigidimarina (strain NCIMB 400).